Reading from the N-terminus, the 82-residue chain is Exodeoxyribonuclease 7 small subunit (82 aa).

This sequence belongs to the XseB family. As to quaternary structure, heterooligomer composed of large and small subunits.

Its subcellular location is the cytoplasm. The enzyme catalyses Exonucleolytic cleavage in either 5'- to 3'- or 3'- to 5'-direction to yield nucleoside 5'-phosphates.. Bidirectionally degrades single-stranded DNA into large acid-insoluble oligonucleotides, which are then degraded further into small acid-soluble oligonucleotides. This is Exodeoxyribonuclease 7 small subunit from Mycobacterium avium (strain 104).